The following is a 215-amino-acid chain: UPF0502 protein YceH (215 aa).

This sequence belongs to the UPF0502 family.

This chain is UPF0502 protein YceH, found in Salmonella schwarzengrund (strain CVM19633).